We begin with the raw amino-acid sequence, 253 residues long: Dihydroanticapsin 7-dehydrogenase (253 aa).

An NAD(+)-binding site is contributed by 9–31; it reads LITGGASGIGYAAVQAFLGQQAN. S139 is a binding site for substrate. The Proton acceptor role is filled by Y152.

This sequence belongs to the short-chain dehydrogenases/reductases (SDR) family.

The enzyme catalyses L-dihydroanticapsin + NAD(+) = L-anticapsin + NADH + H(+). The protein operates within antibiotic biosynthesis; bacilysin biosynthesis. Its function is as follows. Part of the bacABCDEFG operon responsible for the biosynthesis of bacilysin, an irreversible inactivator of the glutaminase domain of glucosamine synthetase. Catalyzes the dehydrogenation of the C7-hydroxyl group in the 4S-tetrahydrotyrosine (4S-H4Tyr) to yield anticapsin (epoxycyclohexanonyl-Ala). It is not able to oxidize the 4R-H4Tyr diastereomer and the dihydrobacilysin dipeptide (L-Ala-4S-H4Tyr dipeptide). This Bacillus subtilis (strain 168) protein is Dihydroanticapsin 7-dehydrogenase.